The primary structure comprises 157 residues: Peptide methionine sulfoxide reductase MsrA (157 aa).

Residue Cys13 is part of the active site.

Belongs to the MsrA Met sulfoxide reductase family.

The catalysed reaction is L-methionyl-[protein] + [thioredoxin]-disulfide + H2O = L-methionyl-(S)-S-oxide-[protein] + [thioredoxin]-dithiol. It catalyses the reaction [thioredoxin]-disulfide + L-methionine + H2O = L-methionine (S)-S-oxide + [thioredoxin]-dithiol. Its function is as follows. Has an important function as a repair enzyme for proteins that have been inactivated by oxidation. Catalyzes the reversible oxidation-reduction of methionine sulfoxide in proteins to methionine. The polypeptide is Peptide methionine sulfoxide reductase MsrA (Methanococcus maripaludis (strain C6 / ATCC BAA-1332)).